Consider the following 181-residue polypeptide: Crossover junction endodeoxyribonuclease RuvC (181 aa).

Residues Asp-7, Glu-67, and Asp-139 contribute to the active site. Positions 7, 67, and 139 each coordinate Mg(2+).

The protein belongs to the RuvC family. Homodimer which binds Holliday junction (HJ) DNA. The HJ becomes 2-fold symmetrical on binding to RuvC with unstacked arms; it has a different conformation from HJ DNA in complex with RuvA. In the full resolvosome a probable DNA-RuvA(4)-RuvB(12)-RuvC(2) complex forms which resolves the HJ. Mg(2+) is required as a cofactor.

The protein localises to the cytoplasm. It catalyses the reaction Endonucleolytic cleavage at a junction such as a reciprocal single-stranded crossover between two homologous DNA duplexes (Holliday junction).. Its function is as follows. The RuvA-RuvB-RuvC complex processes Holliday junction (HJ) DNA during genetic recombination and DNA repair. Endonuclease that resolves HJ intermediates. Cleaves cruciform DNA by making single-stranded nicks across the HJ at symmetrical positions within the homologous arms, yielding a 5'-phosphate and a 3'-hydroxyl group; requires a central core of homology in the junction. The consensus cleavage sequence is 5'-(A/T)TT(C/G)-3'. Cleavage occurs on the 3'-side of the TT dinucleotide at the point of strand exchange. HJ branch migration catalyzed by RuvA-RuvB allows RuvC to scan DNA until it finds its consensus sequence, where it cleaves and resolves the cruciform DNA. This chain is Crossover junction endodeoxyribonuclease RuvC, found in Ralstonia nicotianae (strain ATCC BAA-1114 / GMI1000) (Ralstonia solanacearum).